The sequence spans 149 residues: Myoglobin (149 aa).

The residue at position 2 (Val-2) is an N-acetylvaline. One can recognise a Globin domain in the interval 2–143; that stretch reads VDWEKVNSVW…ICSDIEKEYK (142 aa). His-89 contributes to the heme b binding site.

The protein belongs to the globin family. In terms of assembly, monomeric.

The protein resides in the cytoplasm. It localises to the sarcoplasm. It carries out the reaction Fe(III)-heme b-[protein] + nitric oxide + H2O = Fe(II)-heme b-[protein] + nitrite + 2 H(+). The enzyme catalyses H2O2 + AH2 = A + 2 H2O. Its function is as follows. Monomeric heme protein which primary function is to store oxygen and facilitate its diffusion within muscle tissues. Reversibly binds oxygen through a pentacoordinated heme iron and enables its timely and efficient release as needed during periods of heightened demand. Depending on the oxidative conditions of tissues and cells, and in addition to its ability to bind oxygen, it also has a nitrite reductase activity whereby it regulates the production of bioactive nitric oxide. Under stress conditions, like hypoxia and anoxia, it also protects cells against reactive oxygen species thanks to its pseudoperoxidase activity. The protein is Myoglobin (mb) of Mustelus antarcticus (Gummy shark).